Here is a 91-residue protein sequence, read N- to C-terminus: Small ribosomal subunit protein uS19 (91 aa).

This sequence belongs to the universal ribosomal protein uS19 family.

Protein S19 forms a complex with S13 that binds strongly to the 16S ribosomal RNA. In Methylacidiphilum infernorum (isolate V4) (Methylokorus infernorum (strain V4)), this protein is Small ribosomal subunit protein uS19.